The primary structure comprises 144 residues: Granulocyte-macrophage colony-stimulating factor (144 aa).

Residues 1–17 form the signal peptide; it reads MWLQNLLFLNTVVCSIS. O-linked (GalNAc...) serine glycosylation is found at serine 22 and serine 24. Threonine 27 carries O-linked (GalNAc...) threonine glycosylation. N-linked (GlcNAc...) asparagine glycans are attached at residues asparagine 44, asparagine 45, and asparagine 54. 2 cysteine pairs are disulfide-bonded: cysteine 71–cysteine 113 and cysteine 105–cysteine 138.

This sequence belongs to the GM-CSF family. Monomer. The signaling GM-CSF receptor complex is a dodecamer of two head-to-head hexamers of two alpha, two beta, and two ligand subunits.

The protein resides in the secreted. Functionally, cytokine that stimulates the growth and differentiation of hematopoietic precursor cells from various lineages, including granulocytes, macrophages, eosinophils and erythrocytes. This Felis catus (Cat) protein is Granulocyte-macrophage colony-stimulating factor (CSF2).